The chain runs to 137 residues: MRNFDLSPLYRSAIGFDRLFNLLENNQSQSNGGYPPYNVELVDENHYRIAIAVAGFAESELEITAQDNLLIVKGAHAAEQKERTYLYQGIAERNFERKFQLAENIHVRGANLVNGLLYIDLERVIPEANKPRRIEIN.

Positions 28–137 (SQSNGGYPPY…ANKPRRIEIN (110 aa)) constitute a sHSP domain.

The protein belongs to the small heat shock protein (HSP20) family. Monomer. Forms homomultimers of about 100-150 subunits at optimal growth temperatures. Conformation changes to monomers at high temperatures or high ionic concentrations.

The protein localises to the cytoplasm. Associates with aggregated proteins, together with IbpB, to stabilize and protect them from irreversible denaturation and extensive proteolysis during heat shock and oxidative stress. Aggregated proteins bound to the IbpAB complex are more efficiently refolded and reactivated by the ATP-dependent chaperone systems ClpB and DnaK/DnaJ/GrpE. Its activity is ATP-independent. This Klebsiella pneumoniae (strain 342) protein is Small heat shock protein IbpA.